The sequence spans 569 residues: Peroxynitrite isomerase THAP4 (569 aa).

A THAP-type zinc finger spans residues 1–85 (MVICCAAVNC…LKPTAVPSIF (85 aa)). The interval 88–216 (SEKKRGAGGH…DKSGISMDDF (129 aa)) is disordered. Composition is skewed to polar residues over residues 121–130 (IGSSLSSSDN) and 157–167 (AVSQEQGQSLE). S159 carries the post-translational modification Phosphoserine. The HCFC1-binding motif (HBM) signature appears at 230–233 (LHSY). Residue S234 is modified to Phosphoserine. A disordered region spans residues 235-312 (FSSKHTRERP…EAVQSEHSDA (78 aa)). Residues 242–262 (ERPSVPREPMDRKRLKREMEP) show a composition bias toward basic and acidic residues. Over residues 265–279 (SGNSVAQSPPSSSLT) the composition is skewed to polar residues. Residues 280-289 (ATPQKASQSP) are compositionally biased toward low complexity. A nitrobindin region spans residues 407–569 (PPKLNPVVEP…LHITYKKVTP (163 aa)). Heme b contacts are provided by T436 and H559.

This sequence in the C-terminal section; belongs to the nitrobindin family. Homodimer. Heme b serves as cofactor.

It localises to the cytoplasm. The protein localises to the nucleus. It carries out the reaction peroxynitrite = nitrate. It functions in the pathway nitrogen metabolism. In terms of biological role, heme-binding protein able to scavenge peroxynitrite and to protect free L-tyrosine against peroxynitrite-mediated nitration, by acting as a peroxynitrite isomerase that converts peroxynitrite to nitrate. Therefore, this protein likely plays a role in peroxynitrite sensing and in the detoxification of reactive nitrogen and oxygen species (RNS and ROS, respectively). Is able to bind nitric oxide (NO) in vitro, but may act as a sensor of peroxynitrite levels in vivo, possibly modulating the transcriptional activity residing in the N-terminal region. In Mus musculus (Mouse), this protein is Peroxynitrite isomerase THAP4.